The primary structure comprises 357 residues: MNTITVYRLGRVEYEDGLALMHLFSESRRQGLSGDVLLLLEHPPILTLGRAAKRENIVASDAQLAKEGAEVFETNRGGDVTYHGPGQLVGYPIFLLPEDRRDVRRYVRDVERSVMQVLAQWGITAGPIPKWPGVWIGAEGAPDARKIAAIGVHLSRWLTTHGFALNVNTNLDHFQLIVPCGIREAGVTSMQRELGRALPMAEVEEAIANSFCTVFDSERVDAPPPMRTVSIAVVKGRGPEARVLLVRRRPERGGFWQVLTGRLEAGESPAQAAARELEEETGLRVPLVDLDYRHAFALGEALPPQLVEENGFAVHVPPDADVRLGAEHDAFEWVDVPTALERLPFQGLRETVKRATA.

The lipB domain stretch occupies residues 1 to 222 (MNTITVYRLG…TVFDSERVDA (222 aa)). In terms of domain architecture, BPL/LPL catalytic spans 31–219 (GLSGDVLLLL…SFCTVFDSER (189 aa)). Substrate is bound by residues 76-83 (RGGDVTYH), 149-151 (AIG), and 162-164 (GFA). Cys180 functions as the Acyl-thioester intermediate in the catalytic mechanism. Residues 224-356 (PPMRTVSIAV…GLRETVKRAT (133 aa)) enclose the Nudix hydrolase domain. Positions 261–282 (GRLEAGESPAQAAARELEEETG) match the Nudix box motif.

In the N-terminal section; belongs to the LipB family.

It is found in the cytoplasm. The catalysed reaction is octanoyl-[ACP] + L-lysyl-[protein] = N(6)-octanoyl-L-lysyl-[protein] + holo-[ACP] + H(+). It functions in the pathway protein modification; protein lipoylation via endogenous pathway; protein N(6)-(lipoyl)lysine from octanoyl-[acyl-carrier-protein]: step 1/2. Its function is as follows. Catalyzes the transfer of endogenously produced octanoic acid from octanoyl-acyl-carrier-protein onto the lipoyl domains of lipoate-dependent enzymes. Lipoyl-ACP can also act as a substrate although octanoyl-ACP is likely to be the physiological substrate. In Myxococcus xanthus, this protein is Octanoyltransferase (lipB).